The sequence spans 296 residues: N-acetylmuramic acid 6-phosphate etherase (296 aa).

An SIS domain is found at 54 to 217; it reads VIASFQQGGR…STTAMVGIGK (164 aa). Catalysis depends on Glu-82, which acts as the Proton donor. Glu-113 is a catalytic residue.

This sequence belongs to the GCKR-like family. MurNAc-6-P etherase subfamily. In terms of assembly, homodimer.

The enzyme catalyses N-acetyl-D-muramate 6-phosphate + H2O = N-acetyl-D-glucosamine 6-phosphate + (R)-lactate. Its pathway is amino-sugar metabolism; N-acetylmuramate degradation. Specifically catalyzes the cleavage of the D-lactyl ether substituent of MurNAc 6-phosphate, producing GlcNAc 6-phosphate and D-lactate. The polypeptide is N-acetylmuramic acid 6-phosphate etherase (Shouchella clausii (strain KSM-K16) (Alkalihalobacillus clausii)).